The following is a 192-amino-acid chain: Probable nicotinate-nucleotide adenylyltransferase (192 aa).

The protein belongs to the NadD family.

The enzyme catalyses nicotinate beta-D-ribonucleotide + ATP + H(+) = deamido-NAD(+) + diphosphate. Its pathway is cofactor biosynthesis; NAD(+) biosynthesis; deamido-NAD(+) from nicotinate D-ribonucleotide: step 1/1. Functionally, catalyzes the reversible adenylation of nicotinate mononucleotide (NaMN) to nicotinic acid adenine dinucleotide (NaAD). This Cereibacter sphaeroides (strain ATCC 17029 / ATH 2.4.9) (Rhodobacter sphaeroides) protein is Probable nicotinate-nucleotide adenylyltransferase.